The sequence spans 393 residues: Small ribosomal subunit protein bS1 (393 aa).

S1 motif domains lie at 16-90 (GDKV…LSKR), 108-173 (NQTI…LSRK), 194-262 (GDVI…LSIK), and 279-348 (GDVI…LSIK). A compositionally biased stretch (polar residues) spans 356 to 369 (VIESDSETTQSYLD). The interval 356-381 (VIESDSETTQSYLDNGSDDEDNPTLG) is disordered.

It belongs to the bacterial ribosomal protein bS1 family.

Its function is as follows. Binds mRNA; thus facilitating recognition of the initiation point. It is needed to translate mRNA with a short Shine-Dalgarno (SD) purine-rich sequence. This is Small ribosomal subunit protein bS1 (rpsA) from Staphylococcus saprophyticus subsp. saprophyticus (strain ATCC 15305 / DSM 20229 / NCIMB 8711 / NCTC 7292 / S-41).